Reading from the N-terminus, the 456-residue chain is Probable glycine dehydrogenase (decarboxylating) subunit 1 (456 aa).

The protein belongs to the GcvP family. N-terminal subunit subfamily. In terms of assembly, the glycine cleavage system is composed of four proteins: P, T, L and H. In this organism, the P 'protein' is a heterodimer of two subunits.

It catalyses the reaction N(6)-[(R)-lipoyl]-L-lysyl-[glycine-cleavage complex H protein] + glycine + H(+) = N(6)-[(R)-S(8)-aminomethyldihydrolipoyl]-L-lysyl-[glycine-cleavage complex H protein] + CO2. In terms of biological role, the glycine cleavage system catalyzes the degradation of glycine. The P protein binds the alpha-amino group of glycine through its pyridoxal phosphate cofactor; CO(2) is released and the remaining methylamine moiety is then transferred to the lipoamide cofactor of the H protein. The sequence is that of Probable glycine dehydrogenase (decarboxylating) subunit 1 from Legionella pneumophila (strain Corby).